The chain runs to 440 residues: Translation initiation factor eIF2B subunit gamma (440 aa).

Belongs to the eIF-2B gamma/epsilon subunits family. In terms of assembly, component of the translation initiation factor 2B (eIF2B) complex which is a heterodecamer of two sets of five different subunits: alpha, beta, gamma, delta and epsilon. Subunits alpha, beta and delta comprise a regulatory subcomplex and subunits epsilon and gamma comprise a catalytic subcomplex. Within the complex, the hexameric regulatory complex resides at the center, with the two heterodimeric catalytic subcomplexes bound on opposite sides.

The protein localises to the cytoplasm. It is found in the cytosol. Its function is as follows. Acts as a component of the translation initiation factor 2B (eIF2B) complex, which catalyzes the exchange of GDP for GTP on the eukaryotic initiation factor 2 (eIF2) complex gamma subunit. Its guanine nucleotide exchange factor activity is repressed when bound to eIF2 complex phosphorylated on the alpha subunit, thereby limiting the amount of methionyl-initiator methionine tRNA available to the ribosome and consequently global translation is repressed. The polypeptide is Translation initiation factor eIF2B subunit gamma (eif2b3) (Dictyostelium discoideum (Social amoeba)).